The following is a 386-amino-acid chain: 1-deoxy-D-xylulose 5-phosphate reductoisomerase (386 aa).

Thr10, Gly11, Ser12, Ile13, Gly36, Asn38, and Asn122 together coordinate NADPH. A 1-deoxy-D-xylulose 5-phosphate-binding site is contributed by Lys123. Glu124 contacts NADPH. Asp148 contacts Mn(2+). Residues Ser149, Glu150, Ser174, and His197 each coordinate 1-deoxy-D-xylulose 5-phosphate. Position 150 (Glu150) interacts with Mn(2+). Gly203 is an NADPH binding site. 4 residues coordinate 1-deoxy-D-xylulose 5-phosphate: Ser210, Asn215, Lys216, and Glu219. Glu219 contacts Mn(2+).

Belongs to the DXR family. Mg(2+) is required as a cofactor. The cofactor is Mn(2+).

The enzyme catalyses 2-C-methyl-D-erythritol 4-phosphate + NADP(+) = 1-deoxy-D-xylulose 5-phosphate + NADPH + H(+). Its pathway is isoprenoid biosynthesis; isopentenyl diphosphate biosynthesis via DXP pathway; isopentenyl diphosphate from 1-deoxy-D-xylulose 5-phosphate: step 1/6. Functionally, catalyzes the NADPH-dependent rearrangement and reduction of 1-deoxy-D-xylulose-5-phosphate (DXP) to 2-C-methyl-D-erythritol 4-phosphate (MEP). This is 1-deoxy-D-xylulose 5-phosphate reductoisomerase from Geotalea uraniireducens (strain Rf4) (Geobacter uraniireducens).